The chain runs to 475 residues: Lipoprotein lipase (475 aa).

The first 27 residues, 1–27 (MESKALLVLTLAVWLQSLTASRGGVAA), serve as a signal peptide directing secretion. The tract at residues 32 to 53 (RDFIDIESKFALRTPEDTAEDT) is interaction with GPIHBP1. Cys54 and Cys67 are oxidised to a cystine. Residue Asn70 is glycosylated (N-linked (GlcNAc...) asparagine). Residue Tyr121 is modified to 3'-nitrotyrosine. Catalysis depends on Ser159, which acts as the Nucleophile. The active-site Charge relay system is Asp183. 3'-nitrotyrosine is present on Tyr191. Residues Ala194, Arg197, Ser199, and Asp202 each coordinate Ca(2+). The cysteines at positions 243 and 266 are disulfide-linked. The essential for determining substrate specificity stretch occupies residues 243 to 266 (CNIGEAIRVIAERGLGDVDQLVKC). His268 acts as the Charge relay system in catalysis. 2 cysteine pairs are disulfide-bonded: Cys291/Cys310 and Cys302/Cys305. One can recognise a PLAT domain in the interval 341 to 464 (FHYQVKIHFS…KGKAPAVFVK (124 aa)). Residue Tyr343 is modified to 3'-nitrotyrosine. A glycan (N-linked (GlcNAc...) asparagine) is linked at Asn386. The important for interaction with lipoprotein particles stretch occupies residues 417 to 421 (WSDWW). Residues 430 to 434 (KIRVK) are important for heparin binding. Residues 443 to 467 (IFCSREKVSHLQKGKAPAVFVKCHD) are interaction with GPIHBP1. A disulfide bridge links Cys445 with Cys465.

It belongs to the AB hydrolase superfamily. Lipase family. As to quaternary structure, homodimer. Interacts with GPIHBP1 with 1:1 stoichiometry. Interacts with APOC2; the interaction activates LPL activity in the presence of lipids. Interaction with heparan sulfate proteoglycans is required to protect LPL against loss of activity. Associates with lipoprotein particles in blood plasma. Interacts with LMF1 and SEL1L; interaction with SEL1L is required to prevent aggregation of newly synthesized LPL in the endoplasmic reticulum (ER), and for normal export of LPL from the ER to the extracellular space. Interacts with SORL1; SORL1 acts as a sorting receptor, promoting LPL localization to endosomes and later to lysosomes, leading to degradation of newly synthesized LPL. In terms of processing, tyrosine nitration after lipopolysaccharide (LPS) challenge down-regulates the lipase activity. Detected in blood plasma. Detected in milk (at protein level).

The protein resides in the cell membrane. The protein localises to the secreted. It localises to the extracellular space. It is found in the extracellular matrix. It catalyses the reaction a triacylglycerol + H2O = a diacylglycerol + a fatty acid + H(+). The enzyme catalyses a 1,2-diacyl-sn-glycero-3-phosphocholine + H2O = a 2-acyl-sn-glycero-3-phosphocholine + a fatty acid + H(+). It carries out the reaction 1,2,3-tri-(9Z-octadecenoyl)-glycerol + H2O = di-(9Z)-octadecenoylglycerol + (9Z)-octadecenoate + H(+). The catalysed reaction is 1,2-di-(9Z-octadecenoyl)-sn-glycero-3-phosphocholine + H2O = (9Z-octadecenoyl)-sn-glycero-3-phosphocholine + (9Z)-octadecenoate + H(+). It catalyses the reaction 1,2,3-tributanoylglycerol + H2O = dibutanoylglycerol + butanoate + H(+). The enzyme catalyses 1,2-dihexadecanoyl-sn-glycero-3-phosphocholine + H2O = hexadecanoyl-sn-glycero-3-phosphocholine + hexadecanoate + H(+). With respect to regulation, the apolipoprotein APOC2 acts as a coactivator of LPL activity. Ca(2+) binding promotes protein stability and formation of the active homodimer. Interaction with GPIHBP1 protects LPL against inactivation by ANGPTL4. Inhibited by NaCl. Key enzyme in triglyceride metabolism. Catalyzes the hydrolysis of triglycerides from circulating chylomicrons and very low density lipoproteins (VLDL), and thereby plays an important role in lipid clearance from the blood stream, lipid utilization and storage. Although it has both phospholipase and triglyceride lipase activities it is primarily a triglyceride lipase with low but detectable phospholipase activity. Mediates margination of triglyceride-rich lipoprotein particles in capillaries. Recruited to its site of action on the luminal surface of vascular endothelium by binding to GPIHBP1 and cell surface heparan sulfate proteoglycans. This is Lipoprotein lipase (LPL) from Homo sapiens (Human).